A 616-amino-acid polypeptide reads, in one-letter code: MALLHIAEPGLSAAPHQQKWAVGIDLGTTNSLVAVVRSGVAETLKDEQGRDILPSVVRYLPDGLQIGAEAKHAAAEDPLNTIQSVKRFMGKALSDITQTNLPYQFTGADKGLVHINTCQGEVNPVQVSAEILKALQLRATEALGAELDGVVITVPAYFNDAQRQATKDAARLAGMHVLRLLNEPTAAAVAYGLDSGQEGVIAVYDLGGGTFDISILRLHQGVFEVMATGGDSALGGDDFDHLLADWIAEQADLIAPFTPRVQRQLLDLACDVKQQLSSQDTVAVSFAQWSGSIDRTQFEDLITPLVKKTLMSCRRAIKDAGVEADEVLEVVMVGGSTRVPLVRQLVGDFFGRTPLTSIDPDKVVAVGAAIQADILVGNKPESEMLLLDVIPLSLGLETMGGLVEKIIPRNTTIPAARAQDFTTFKDGQTAMMIHVLQGERELVSDCRSLARFVLKGIPPLAAGAAHIRVTFQVDADGLLSVSAMEKSTGVQAAIEVKPSYGLQEEDMLRMLRESVEFAEKDIKARMLVEQKVEADRVLESLRQALSKDGDALLSPEERSVINDAIQNLVNIQQGDDTDAIKAAITALDEATSEFAARRMDSSIRQALQGHKIDEVN.

Belongs to the heat shock protein 70 family.

Its function is as follows. Chaperone involved in the maturation of iron-sulfur cluster-containing proteins. Has a low intrinsic ATPase activity which is markedly stimulated by HscB. This Tolumonas auensis (strain DSM 9187 / NBRC 110442 / TA 4) protein is Chaperone protein HscA homolog.